A 93-amino-acid chain; its full sequence is Defensin alpha 4 (93 aa).

Residues 1–19 (MRTLTLLITLLLLALHTQA) form the signal peptide. The propeptide occupies 20–62 (ESPQERAKAAPDQDMVMEDQDIFISFGGYKGTVLQDAVVKAGQ). 3 cysteine pairs are disulfide-bonded: cysteine 64–cysteine 92, cysteine 66–cysteine 81, and cysteine 71–cysteine 91.

This sequence belongs to the alpha-defensin family. In terms of tissue distribution, expressed in neutrophils (at protein level). Highest expression in bone marrow and to a much lesser extent in small intestine.

The protein localises to the secreted. In terms of biological role, host-defense peptide that has antimicrobial activity against Gram-positive and Gram-negative bacteria and fungi (in vitro). Exhibits activity against E.coli, A.calcoaceticus, S,aureus and C.albicans. The polypeptide is Defensin alpha 4 (Rattus norvegicus (Rat)).